The chain runs to 1071 residues: MSSHLSQDANMNGVYVRSDVSSMLSFDGSESRESMDDSKKGHQSLVEWLNETLPYLKLPWEASEDELRACLRDGTVLCSLLNQLSPGSMRMGGSFEPASVKIERFLTAMDEMALPRFEVSDIEQGDMVPVLQSLKALKASFSDGSYDKNSLAARRRWSLPEDHSDSRGDDRNFTDGFQSKEGSEIDMSDAKISDLLKSNSLRNAPTRSLFDMLDKLLDESMTKMNGHVSHAMASLLSALVQVIEQRISNQADNLKNQNILFRVREEKYRSRIKVLESLAAGTTKENEIVTNCMEHIKLEKTRIEEKERSEEKDVVRLRKEKERSDAEIRQLKQELKLVKETHENQCLELEAKAQKTRDELEKKLKDAELHVVDSSRKVKELEKLCQSKSQRWEKKECIYQNFIDNHSGALQELSATSLSIKHEVVRTQRKYFEDLNYYGLKLKGVADAAKNYHVVLEENRRLYNEVQELKGNIRVYCRIRPFLPGQNSRQTTIEYIGETGELVVANPFKQGKDTHRLFKFNKVFDQAATQEEVFLDTRPLIRSILDGYNVCIFAYGQTGSGKTYTMSGPSITSKEDWGVNYRALNDLFLLTQSRQNTVMYEVGVQMVEIYNEQVRDILSDGGSSRRLGIWNTALPNGLAVPDASMHCVRSTEDVLELMNIGLMNRTVGATALNERSSRSHCVLSVHVRGVDVETDSILRGSLHLVDLAGSERVDRSEATGERLKEAQHINKSLSALGDVIFALAHKNPHVPYRNSKLTQVLQSSLGGQAKTLMFVQVNPDGDSYAETVSTLKFAERVSGVELGAAKSSKEGRDVRQLMEQVSNLKDVIAKKDEELQNFQKVKGNNATSLKRGLSNLRLVGPTSPRRHSIGASPNARRGKASGLFGRGTSDVDNCSEYSSKHSDSGSQQSSDERKHQKDYHQPSKFAGAAKGIDFDDEDVELVGLADADSEDRLSDISDSCLSMGTETDGSISSAVELTLFPETAKPLELIERPEARMTSEKLEKSVKMGKTEPKDRTNIPSKIPKQTLKPPGQTRPSRLSIATSSSSKALTGAKRPTISTSSSAKPLNRRR.

The 104-residue stretch at 39–142 folds into the Calponin-homology (CH) domain; that stretch reads KKGHQSLVEW…SLKALKASFS (104 aa). The interval 157-181 is disordered; it reads WSLPEDHSDSRGDDRNFTDGFQSKE. A compositionally biased stretch (basic and acidic residues) spans 158–173; the sequence is SLPEDHSDSRGDDRNF. Residues 299 to 389 are a coiled coil; the sequence is EKTRIEEKER…ELEKLCQSKS (91 aa). The region spanning 472 to 800 is the Kinesin motor domain; sequence NIRVYCRIRP…LKFAERVSGV (329 aa). 556–563 contacts ATP; it reads GQTGSGKT. The stretch at 811 to 844 forms a coiled coil; it reads GRDVRQLMEQVSNLKDVIAKKDEELQNFQKVKGN. Disordered regions lie at residues 852–931 and 995–1071; these read GLSN…AAKG and ARMT…NRRR. Basic and acidic residues-rich tracts occupy residues 910–921 and 995–1017; these read SDERKHQKDYHQ and ARMT…KDRT. Positions 1034–1049 are enriched in polar residues; sequence TRPSRLSIATSSSSKA.

Belongs to the TRAFAC class myosin-kinesin ATPase superfamily. Kinesin family. KIN-14 subfamily.

The polypeptide is Kinesin-like protein KIN-14J (Arabidopsis thaliana (Mouse-ear cress)).